The sequence spans 316 residues: L-lactate dehydrogenase (316 aa).

Residues 13 to 15 (GMI), 34 to 36 (FDI), Tyr67, and 79 to 83 (TAGFT) each bind NAD(+). Residue Arg95 participates in substrate binding. Residues 125 to 127 (VTN), Leu150, and Leu154 each bind NAD(+). Positions 158 and 182 each coordinate substrate. His182 lines the NAD(+) pocket. Catalysis depends on His182, which acts as the Proton acceptor.

Belongs to the LDH/MDH superfamily. LDH family. In terms of assembly, homotetramer.

The enzyme catalyses (S)-lactate + NAD(+) = pyruvate + NADH + H(+). It participates in fermentation; pyruvate fermentation to lactate; (S)-lactate from pyruvate: step 1/1. The sequence is that of L-lactate dehydrogenase from Plasmodium berghei.